A 258-amino-acid chain; its full sequence is Snake venom serine protease 5 (258 aa).

An N-terminal signal peptide occupies residues 1 to 18 (MVLIRVLANLLILQLSYA). Positions 19 to 24 (QKSSEL) are excised as a propeptide. One can recognise a Peptidase S1 domain in the interval 25 to 249 (VVGGRPCNIN…HLDWIQNIIA (225 aa)). Cystine bridges form between cysteine 31–cysteine 163, cysteine 50–cysteine 66, cysteine 98–cysteine 256, cysteine 142–cysteine 210, cysteine 174–cysteine 189, and cysteine 200–cysteine 225. Asparagine 44 carries N-linked (GlcNAc...) asparagine glycosylation. Residue histidine 65 is the Charge relay system of the active site. N-linked (GlcNAc...) asparagine glycosylation occurs at asparagine 103. Aspartate 110 functions as the Charge relay system in the catalytic mechanism. 4 N-linked (GlcNAc...) asparagine glycosylation sites follow: asparagine 121, asparagine 122, asparagine 154, and asparagine 170. The active-site Charge relay system is serine 204. Asparagine 251 is a glycosylation site (N-linked (GlcNAc...) asparagine).

Belongs to the peptidase S1 family. Snake venom subfamily. Monomer. In terms of tissue distribution, expressed by the venom gland.

It is found in the secreted. In terms of biological role, snake venom serine protease that may act in the hemostasis system of the prey. This Trimeresurus stejnegeri (Chinese green tree viper) protein is Snake venom serine protease 5.